We begin with the raw amino-acid sequence, 492 residues long: MRIFLVGMMGSGKSTIGKRISEVLDLQFIDMDEEIERREGRSVRRIFEEDGEEYFRLKEKELLKELVERDNVVVATGGGVVVDPENRELLKKEKTLFLYAPPEVLMERVTTENRPLLSEGKERIREIWEKRKQFYAEFRRIDTSRLNEWETTALVVLEALDEKEISTIEKPHLVKIILGGFKRVRNEELVFTTERVEKIYGRYLPENRLLFPDGEEVKTLEHVSRAYYELIRMDFPRGKTIAGVGGGALTDFTGFVASTFKRGVGLSFYPTTLLAQVDASVGGKNAIDFAGVKNVVGTFRMPDYVIIDPTVTLSMDEGRFEEGVVEAFKMTILSGRGVELFDEPEKIEKRNLRVLSEMVKISVEEKARIVMEDPYDMGLRHALNLGHTLGHVYEMLEGVPHGIAVAWGIEKETMYLYRKGIVPKETMRWIVEKVKQIVPIPVPSVDVEKARNLILNDKKILKGSRVRLPYVKEIGKIEFLEVDPLELLEVVD.

The interval 1-161 is shikimate kinase; it reads MRIFLVGMMG…TALVVLEALD (161 aa). Residue 10–15 participates in ATP binding; it reads GSGKST. Ser-14 provides a ligand contact to Mg(2+). Residues Asp-32, Arg-56, and Gly-78 each coordinate substrate. Residue Arg-114 coordinates ATP. Substrate is bound at residue Arg-131. The interval 162–492 is 3-dehydroquinate synthase; sequence EKEISTIEKP…DPLELLEVVD (331 aa).

This sequence in the N-terminal section; belongs to the shikimate kinase family. It in the C-terminal section; belongs to the sugar phosphate cyclases superfamily. Dehydroquinate synthase family. Requires Mg(2+) as cofactor. The cofactor is NAD(+). It depends on a divalent metal cation as a cofactor.

The protein resides in the cytoplasm. The catalysed reaction is 7-phospho-2-dehydro-3-deoxy-D-arabino-heptonate = 3-dehydroquinate + phosphate. It catalyses the reaction shikimate + ATP = 3-phosphoshikimate + ADP + H(+). It functions in the pathway metabolic intermediate biosynthesis; chorismate biosynthesis; chorismate from D-erythrose 4-phosphate and phosphoenolpyruvate: step 2/7. It participates in metabolic intermediate biosynthesis; chorismate biosynthesis; chorismate from D-erythrose 4-phosphate and phosphoenolpyruvate: step 5/7. In terms of biological role, catalyzes the specific phosphorylation of the 3-hydroxyl group of shikimic acid using ATP as a cosubstrate. The chain is Bifunctional shikimate kinase/3-dehydroquinate synthase (aroKB) from Thermotoga maritima (strain ATCC 43589 / DSM 3109 / JCM 10099 / NBRC 100826 / MSB8).